The following is a 278-amino-acid chain: Digeranylgeranylglyceryl phosphate synthase (278 aa).

7 consecutive transmembrane segments (helical) span residues 12–32 (LKNC…ASYF), 34–54 (ISMI…CGFG), 91–111 (LLVV…LMAV), 142–162 (VFIF…LFLC), 204–224 (FLLV…FFGI), 226–246 (YLIS…NLVM), and 257–277 (SRNI…GSLF).

This sequence belongs to the UbiA prenyltransferase family. DGGGP synthase subfamily. The cofactor is Mg(2+).

It localises to the cell membrane. It catalyses the reaction sn-3-O-(geranylgeranyl)glycerol 1-phosphate + (2E,6E,10E)-geranylgeranyl diphosphate = 2,3-bis-O-(geranylgeranyl)-sn-glycerol 1-phosphate + diphosphate. The protein operates within membrane lipid metabolism; glycerophospholipid metabolism. Prenyltransferase that catalyzes the transfer of the geranylgeranyl moiety of geranylgeranyl diphosphate (GGPP) to the C2 hydroxyl of (S)-3-O-geranylgeranylglyceryl phosphate (GGGP). This reaction is the second ether-bond-formation step in the biosynthesis of archaeal membrane lipids. The polypeptide is Digeranylgeranylglyceryl phosphate synthase (Methanococcus maripaludis (strain C6 / ATCC BAA-1332)).